An 85-amino-acid polypeptide reads, in one-letter code: UPF0386 protein TM1040_0419 (85 aa).

Residues 62 to 85 (SKSSRPYQISEKGRRSVRAQLDNR) form a disordered region.

The protein belongs to the UPF0386 family.

The protein is UPF0386 protein TM1040_0419 of Ruegeria sp. (strain TM1040) (Silicibacter sp.).